The primary structure comprises 345 residues: UDP-N-acetylenolpyruvoylglucosamine reductase (345 aa).

Residues 16–186 form the FAD-binding PCMH-type domain; the sequence is LPAYASNVIS…VSVGIKLMKS (171 aa). Residue Arg-162 is part of the active site. Residue Ser-232 is the Proton donor of the active site. Glu-328 is an active-site residue.

This sequence belongs to the MurB family. Requires FAD as cofactor.

The protein resides in the cytoplasm. The enzyme catalyses UDP-N-acetyl-alpha-D-muramate + NADP(+) = UDP-N-acetyl-3-O-(1-carboxyvinyl)-alpha-D-glucosamine + NADPH + H(+). It participates in cell wall biogenesis; peptidoglycan biosynthesis. Cell wall formation. The sequence is that of UDP-N-acetylenolpyruvoylglucosamine reductase from Yersinia pestis.